We begin with the raw amino-acid sequence, 252 residues long: MSSSQPHRVLREIISTKQNEIKKISAWDPLPHRGLSLRDSLKSRTFSIIAECKRKSPSAGELRADYRPVQIAKTYEELGASAISVLTDQNYFGGSLEDLKDVSSELKIPVLRKDFILDEIQIREARAFGASAILLIVRILTPEQIKSFLKLASSLGMDCLVEVHTSDEAKLALDCGAEIIGINTRDLDTFQIHQNLVEEVSAFLPPNIVKVGESGIKKRSDLDTFRKLVDAALIGTYFMEKQDIRKAWLNLF.

It belongs to the TrpC family.

It carries out the reaction 1-(2-carboxyphenylamino)-1-deoxy-D-ribulose 5-phosphate + H(+) = (1S,2R)-1-C-(indol-3-yl)glycerol 3-phosphate + CO2 + H2O. Its pathway is amino-acid biosynthesis; L-tryptophan biosynthesis; L-tryptophan from chorismate: step 4/5. The polypeptide is Indole-3-glycerol phosphate synthase (Leptospira interrogans serogroup Icterohaemorrhagiae serovar copenhageni (strain Fiocruz L1-130)).